Here is a 1248-residue protein sequence, read N- to C-terminus: ATP-dependent helicase/nuclease subunit A (1248 aa).

The region spanning 4–480 is the UvrD-like helicase ATP-binding domain; sequence TKWTKEQYAA…ILLFKNFRSR (477 aa). ATP is bound at residue 25–32; the sequence is AAAGAGKT. In terms of domain architecture, UvrD-like helicase C-terminal spans 523-820; the sequence is ETVVGGAIEL…RLMSIHKSKG (298 aa).

The protein belongs to the helicase family. AddA subfamily. Heterodimer of AddA and AddB/RexB. The cofactor is Mg(2+).

It carries out the reaction Couples ATP hydrolysis with the unwinding of duplex DNA by translocating in the 3'-5' direction.. It catalyses the reaction ATP + H2O = ADP + phosphate + H(+). Functionally, the heterodimer acts as both an ATP-dependent DNA helicase and an ATP-dependent, dual-direction single-stranded exonuclease. Recognizes the chi site generating a DNA molecule suitable for the initiation of homologous recombination. The AddA nuclease domain is required for chi fragment generation; this subunit has the helicase and 3' -&gt; 5' nuclease activities. The sequence is that of ATP-dependent helicase/nuclease subunit A from Ruminiclostridium cellulolyticum (strain ATCC 35319 / DSM 5812 / JCM 6584 / H10) (Clostridium cellulolyticum).